The sequence spans 205 residues: Proteasome subunit beta type-3 (205 aa).

Serine 31 carries the post-translational modification Phosphoserine. Lysine 70 is covalently cross-linked (Glycyl lysine isopeptide (Lys-Gly) (interchain with G-Cter in ubiquitin)).

This sequence belongs to the peptidase T1B family. In terms of assembly, the 26S proteasome consists of a 20S proteasome core and two 19S regulatory subunits. The 20S proteasome core is composed of 28 subunits that are arranged in four stacked rings, resulting in a barrel-shaped structure. The two end rings are each formed by seven alpha subunits, and the two central rings are each formed by seven beta subunits. The catalytic chamber with the active sites is on the inside of the barrel.

The protein localises to the cytoplasm. It is found in the nucleus. Its function is as follows. Non-catalytic component of the proteasome which degrades poly-ubiquitinated proteins in the cytoplasm and in the nucleus. It is essential for the regulated turnover of proteins and for the removal of misfolded proteins. The proteasome is a multicatalytic proteinase complex that is characterized by its ability to cleave peptides with Arg, Phe, Tyr, Leu, and Glu adjacent to the leaving group at neutral or slightly basic pH. It has an ATP-dependent proteolytic activity. This subunit may participate in the trypsin-like activity of the enzyme complex. The polypeptide is Proteasome subunit beta type-3 (PUP3) (Saccharomyces cerevisiae (strain ATCC 204508 / S288c) (Baker's yeast)).